Reading from the N-terminus, the 409-residue chain is 1-deoxy-D-xylulose 5-phosphate reductoisomerase (409 aa).

8 residues coordinate NADPH: threonine 10, glycine 11, serine 12, isoleucine 13, glycine 36, arginine 37, asparagine 38, and asparagine 126. Lysine 127 contacts 1-deoxy-D-xylulose 5-phosphate. Residue glutamate 128 participates in NADPH binding. Aspartate 152 is a binding site for Mn(2+). Residues serine 153, glutamate 154, serine 190, and histidine 213 each coordinate 1-deoxy-D-xylulose 5-phosphate. Position 154 (glutamate 154) interacts with Mn(2+). Glycine 219 contacts NADPH. Positions 226, 231, 232, and 235 each coordinate 1-deoxy-D-xylulose 5-phosphate. Glutamate 235 is a binding site for Mn(2+).

It belongs to the DXR family. Mg(2+) is required as a cofactor. Mn(2+) serves as cofactor.

The catalysed reaction is 2-C-methyl-D-erythritol 4-phosphate + NADP(+) = 1-deoxy-D-xylulose 5-phosphate + NADPH + H(+). The protein operates within isoprenoid biosynthesis; isopentenyl diphosphate biosynthesis via DXP pathway; isopentenyl diphosphate from 1-deoxy-D-xylulose 5-phosphate: step 1/6. Its function is as follows. Catalyzes the NADPH-dependent rearrangement and reduction of 1-deoxy-D-xylulose-5-phosphate (DXP) to 2-C-methyl-D-erythritol 4-phosphate (MEP). The polypeptide is 1-deoxy-D-xylulose 5-phosphate reductoisomerase (Prochlorococcus marinus (strain MIT 9515)).